We begin with the raw amino-acid sequence, 185 residues long: Adenylyl-sulfate kinase (185 aa).

13–20 (GLSGAGKT) contributes to the ATP binding site. S87 functions as the Phosphoserine intermediate in the catalytic mechanism.

This sequence belongs to the APS kinase family.

The enzyme catalyses adenosine 5'-phosphosulfate + ATP = 3'-phosphoadenylyl sulfate + ADP + H(+). Its pathway is sulfur metabolism; hydrogen sulfide biosynthesis; sulfite from sulfate: step 2/3. Its function is as follows. Catalyzes the synthesis of activated sulfate. In Halothermothrix orenii (strain H 168 / OCM 544 / DSM 9562), this protein is Adenylyl-sulfate kinase.